The following is a 186-amino-acid chain: Ribosome-recycling factor (186 aa).

The segment at 135–164 is disordered; the sequence is DGMDDLKKAEKDGEIGQDESRAQSERVQKM.

Belongs to the RRF family.

The protein resides in the cytoplasm. Its function is as follows. Responsible for the release of ribosomes from messenger RNA at the termination of protein biosynthesis. May increase the efficiency of translation by recycling ribosomes from one round of translation to another. This chain is Ribosome-recycling factor, found in Sinorhizobium medicae (strain WSM419) (Ensifer medicae).